A 474-amino-acid chain; its full sequence is Protein U79/U80 (474 aa).

Composition is skewed to basic and acidic residues over residues 156–165 and 175–219; these read DRKKHDDEHR and RKVE…KRQK. Disordered regions lie at residues 156–219 and 412–441; these read DRKK…KRQK and SGQNRGRARGRGRGRAPRRRNSNINNSRTQ. A compositionally biased stretch (basic residues) spans 417-432; the sequence is GRARGRGRGRAPRRRN.

This sequence belongs to the herpesviridae U79/UL112 family.

The protein resides in the host nucleus. May be involved in DNA replication. The chain is Protein U79/U80 (U79/U80) from Homo sapiens (Human).